The sequence spans 399 residues: 1-deoxy-D-xylulose 5-phosphate reductoisomerase (399 aa).

NADPH contacts are provided by threonine 13, glycine 14, serine 15, isoleucine 16, and asparagine 127. Lysine 128 lines the 1-deoxy-D-xylulose 5-phosphate pocket. Glutamate 129 is a binding site for NADPH. Aspartate 153 serves as a coordination point for Mn(2+). Serine 154, glutamate 155, serine 187, and histidine 210 together coordinate 1-deoxy-D-xylulose 5-phosphate. Position 155 (glutamate 155) interacts with Mn(2+). Glycine 216 serves as a coordination point for NADPH. 1-deoxy-D-xylulose 5-phosphate contacts are provided by serine 223, asparagine 228, lysine 229, and glutamate 232. Glutamate 232 contacts Mn(2+).

The protein belongs to the DXR family. It depends on Mg(2+) as a cofactor. Requires Mn(2+) as cofactor.

It carries out the reaction 2-C-methyl-D-erythritol 4-phosphate + NADP(+) = 1-deoxy-D-xylulose 5-phosphate + NADPH + H(+). It participates in isoprenoid biosynthesis; isopentenyl diphosphate biosynthesis via DXP pathway; isopentenyl diphosphate from 1-deoxy-D-xylulose 5-phosphate: step 1/6. Its function is as follows. Catalyzes the NADPH-dependent rearrangement and reduction of 1-deoxy-D-xylulose-5-phosphate (DXP) to 2-C-methyl-D-erythritol 4-phosphate (MEP). The chain is 1-deoxy-D-xylulose 5-phosphate reductoisomerase from Bordetella parapertussis (strain 12822 / ATCC BAA-587 / NCTC 13253).